Reading from the N-terminus, the 790-residue chain is Tumor necrosis factor alpha-induced protein 3 (790 aa).

Alanine 2 carries the N-acetylalanine modification. Positions 58-300 are TRAF-binding; it reads PQFREIIHKA…LTDPENEMKE (243 aa). Residues 92 to 263 enclose the OTU domain; it reads LVALKTNGDG…SHHFVPLVTL (172 aa). Aspartate 100 is an active-site residue. Cysteine 103 (nucleophile) is an active-site residue. Interaction with ubiquitin regions lie at residues 157–159, 190–192, and 224–227; these read LCY, SLE, and FAPL. Histidine 256 (proton acceptor) is an active-site residue. The segment covering 357–368 has biased composition (basic and acidic residues); the sequence is QENSEQGRREGH. Residues 357-377 are disordered; that stretch reads QENSEQGRREGHAQNPMEPSV. The interaction with TNIP1 stretch occupies residues 369–775; it reads AQNPMEPSVP…ACDHFGNAKC (407 aa). The A20-type 1 zinc finger occupies 381–416; sequence SLMDVKCETPNCPFFMSVNTQPLCHECSERRQKNQN. The interval 386-453 is interaction with RIPK1; that stretch reads KCETPNCPFF…EPLAWNPEES (68 aa). Positions 387, 392, 404, and 407 each coordinate Zn(2+). 2 disordered regions span residues 415–434 and 447–468; these read QNKL…PGMA and AWNP…PSPF. Serine 459 carries the post-translational modification Phosphoserine. A20-type zinc fingers lie at residues 472 to 507 and 515 to 548; these read ETTA…LHAS and HLDP…AEAS. 8 residues coordinate Zn(2+): cysteine 478, cysteine 483, cysteine 495, cysteine 498, cysteine 521, cysteine 524, cysteine 536, and cysteine 539. The segment at 550–583 is disordered; that stretch reads SLSTSLPPSCHQRSKSDPSRLVRSPSPHSCHRAG. Serine 575 carries the post-translational modification Phosphoserine. Residues 601-636 form an A20-type 4 zinc finger; it reads RTGTSKCRKAGCVYFGTPENKGFCTLCFIEYRENKH. Positions 605–655 are required for proteasomal degradation of UBE2N and UBE2D3, TRAF6 deubiquitination, and TAX1BP1 interaction with UBE2N; it reads SKCRKAGCVYFGTPENKGFCTLCFIEYRENKHFAAASGKVSPTASRFQNTI. Residues 606-790 form a sufficient for inhibitory activity of TNF-induced NF-kappa-B activity region; it reads KCRKAGCVYF…ECFQFKQMYG (185 aa). Positions 607, 612, 624, and 627 each coordinate Zn(2+). Phosphoserine is present on serine 645. Residues 651–686 form an A20-type 5 zinc finger; it reads FQNTIPCLGRECGTLGSTMFEGYCQKCFIEAQNQRF. The Zn(2+) site is built by cysteine 657, cysteine 662, cysteine 674, and cysteine 677. Over residues 689–705 the composition is skewed to basic and acidic residues; the sequence is AKRTEEQLRSSQRRDVP. Positions 689–712 are disordered; sequence AKRTEEQLRSSQRRDVPRTTQSTS. Positions 697–790 are required for lysosomal localization and for TRAF2 lysosomal degradation; the sequence is RSSQRRDVPR…ECFQFKQMYG (94 aa). 2 A20-type zinc fingers span residues 710 to 745 and 756 to 790; these read STSR…RMGP and DPPK…QMYG. Cysteine 716, cysteine 721, cysteine 733, cysteine 736, cysteine 762, cysteine 767, cysteine 779, and cysteine 782 together coordinate Zn(2+).

This sequence belongs to the peptidase C64 family. As to quaternary structure, homodimer. Interacts with TNIP1, TAX1BP1 and TRAF2. Interacts with RNF11, ITCH and TAX1BP1 only after TNF stimulation; these interaction are transient and they are lost after 1 hour of stimulation with TNF. Interacts with YWHAZ and YWHAH. Interacts with IKBKG; the interaction is induced by TNF stimulation and by polyubiquitin. Interacts with RIPK1. Interacts with UBE2N; the interaction requires TAX1BP1. Interacts with TRAF6; the interaction is inhibited by HTLV-1 protein Tax. Post-translationally, proteolytically cleaved by MALT1 upon TCR stimulation; disrupts NF-kappa-B inhibitory function and results in increased IL-2 production. It is proposed that only a fraction of TNFAIP3 colocalized with TCR and CBM complex is cleaved, leaving the main TNFAIP3 pool intact.

It localises to the cytoplasm. Its subcellular location is the nucleus. It is found in the lysosome. The catalysed reaction is Thiol-dependent hydrolysis of ester, thioester, amide, peptide and isopeptide bonds formed by the C-terminal Gly of ubiquitin (a 76-residue protein attached to proteins as an intracellular targeting signal).. Functionally, ubiquitin-editing enzyme that contains both ubiquitin ligase and deubiquitinase activities. Involved in immune and inflammatory responses signaled by cytokines, such as TNF-alpha and IL-1 beta, or pathogens via Toll-like receptors (TLRs) through terminating NF-kappa-B activity. Essential component of a ubiquitin-editing protein complex, comprising also RNF11, ITCH and TAX1BP1, that ensures the transient nature of inflammatory signaling pathways. In cooperation with TAX1BP1 promotes disassembly of E2-E3 ubiquitin protein ligase complexes in IL-1R and TNFR-1 pathways; affected are at least E3 ligases TRAF6, TRAF2 and BIRC2, and E2 ubiquitin-conjugating enzymes UBE2N and UBE2D3. In cooperation with TAX1BP1 promotes ubiquitination of UBE2N and proteasomal degradation of UBE2N and UBE2D3. Upon TNF stimulation, deubiquitinates 'Lys-63'-polyubiquitin chains on RIPK1 and catalyzes the formation of 'Lys-48'-polyubiquitin chains. This leads to RIPK1 proteasomal degradation and consequently termination of the TNF- or LPS-mediated activation of NF-kappa-B. Deubiquitinates TRAF6 probably acting on 'Lys-63'-linked polyubiquitin. Upon T-cell receptor (TCR)-mediated T-cell activation, deubiquitinates 'Lys-63'-polyubiquitin chains on MALT1 thereby mediating disassociation of the CBM (CARD11:BCL10:MALT1) and IKK complexes and preventing sustained IKK activation. Deubiquitinates NEMO/IKBKG; the function is facilitated by TNIP1 and leads to inhibition of NF-kappa-B activation. Upon stimulation by bacterial peptidoglycans, probably deubiquitinates RIPK2. Can also inhibit I-kappa-B-kinase (IKK) through a non-catalytic mechanism which involves polyubiquitin; polyubiquitin promotes association with IKBKG and prevents IKK MAP3K7-mediated phosphorylation. Targets TRAF2 for lysosomal degradation. In vitro able to deubiquitinate 'Lys-11'-, 'Lys-48'- and 'Lys-63' polyubiquitin chains. Inhibitor of programmed cell death. Has a role in the function of the lymphoid system. Required for LPS-induced production of pro-inflammatory cytokines and IFN beta in LPS-tolerized macrophages. The chain is Tumor necrosis factor alpha-induced protein 3 (TNFAIP3) from Homo sapiens (Human).